We begin with the raw amino-acid sequence, 23 residues long: U1-poneritoxin-Da3b (23 aa).

Belongs to the non-disulfide-bridged peptide (NDBP) superfamily. Medium-length antimicrobial peptide (group 3) family. Ponericin-W subfamily. As to expression, expressed by the venom gland.

The protein localises to the secreted. It is found in the target cell membrane. In terms of biological role, may have antimicrobial properties, like most ant linear peptides. May act by disrupting the integrity of the bacterial cell membrane. The polypeptide is U1-poneritoxin-Da3b (Dinoponera australis (Giant neotropical hunting ant)).